The sequence spans 206 residues: Anti-sigma-W factor RsiW (206 aa).

The Cytoplasmic portion of the chain corresponds to 1–87 (MSCPEHIVQL…ASINRWLKAH (87 aa)). 3 residues coordinate Zn(2+): histidine 30, cysteine 34, and cysteine 37. Residues 88–108 (PFLVAAALFAILMGGSFFSSW) traverse the membrane as a helical segment. The Extracellular portion of the chain corresponds to 109-206 (KNDHDFSVSS…SVFGVKESKE (98 aa)).

Belongs to the zinc-associated anti-sigma factor (ZAS) superfamily. Anti-sigma-W factor family. Zn(2+) serves as cofactor. In terms of processing, is processed by three successive proteolytic events. First, the extracellular region of RsiW is cleaved by PrsW (Site-1 cleavage) in response to cell envelope stresses. Next, it undergoes cleavage at an intramembrane site (Site-2 cleavage) mediated by RasP. This cleavage uncovers a cryptic proteolytic tag with conserved alanine residues in the transmembrane segment, that is recognized mainly by the ClpXP protease, which completely degrades the protein in the cytoplasm and leads to the induction of the sigma-W-controlled genes.

Its subcellular location is the membrane. In terms of biological role, is the anti-sigma factor for SigW. The presence of RsiW leads to the inactivation of SigW, and its proteolytic destruction to sigma-W activation. The polypeptide is Anti-sigma-W factor RsiW (rsiW) (Bacillus licheniformis (strain ATCC 14580 / DSM 13 / JCM 2505 / CCUG 7422 / NBRC 12200 / NCIMB 9375 / NCTC 10341 / NRRL NRS-1264 / Gibson 46)).